A 404-amino-acid polypeptide reads, in one-letter code: Glycosylated lysosomal membrane protein (404 aa).

The N-terminal stretch at 1 to 35 (MFRCWGPHWGWVPCAPTPWLLLSLLVCSAPFGLQG) is a signal peptide. The Lumenal segment spans residues 36 to 370 (EETRQVSMEV…VDIFSPLVLG (335 aa)). 9 N-linked (GlcNAc...) asparagine glycosylation sites follow: asparagine 64, asparagine 85, asparagine 94, asparagine 133, asparagine 157, asparagine 166, asparagine 185, asparagine 228, and asparagine 331. A helical membrane pass occupies residues 371–391 (IMAVALGAPGLMFLGGGLFLL). Over 392-404 (LRHRRYSEYQSIN) the chain is Cytoplasmic. Residues 400–404 (YQSIN) carry the Lysosomal targeting motif motif.

The protein belongs to the GLMP family. In terms of assembly, interacts (via lumenal domain) with lysosomal protein MFSD1; the interaction starts while both proteins are still in the endoplasmic reticulum and is required for stabilization of MFSD1 in lysosomes but has no direct effect on its targeting to lysosomes or transporter activity. In terms of processing, highly N-glycosylated. N-glycosylation is essential for GLMP stability and for MFSD1 lysosomal localization. Detected in brain, heart, liver, kidney, lung, intestine, testis and spleen. Expressed at highest levels in kidney cortex. However, another study reports highest expression levels in lung. Expressed in myoblasts with expression increasing during differentiation into myotubes.

The protein resides in the lysosome membrane. Its function is as follows. Required to protect lysosomal transporter MFSD1 from lysosomal proteolysis and for MFSD1 lysosomal localization. The protein is Glycosylated lysosomal membrane protein of Mus musculus (Mouse).